The primary structure comprises 198 residues: Recombination protein RecR (198 aa).

The segment at 58–73 (CSVCGNFTDKDPCAIC) adopts a C4-type zinc-finger fold. In terms of domain architecture, Toprim spans 81-175 (SIICVIEQPK…KVTRIAHGVP (95 aa)).

This sequence belongs to the RecR family.

Its function is as follows. May play a role in DNA repair. It seems to be involved in an RecBC-independent recombinational process of DNA repair. It may act with RecF and RecO. The protein is Recombination protein RecR of Clostridium botulinum (strain ATCC 19397 / Type A).